We begin with the raw amino-acid sequence, 387 residues long: MATTKSVLVLIFMILATTSSTFATLGEMVTVLSIDGGGIKGIIPGIILEFLEGQLQKMDNNADARLADYFDVIGGTSTGGLLTAMITTPNENNRPFAAAKDIVPFYFQHGPHIFNSSTGQFFGPKYDGKYLMQVLQEKLGETRVHQALTEVAISSFDIKTNKPVIFTKSNLARSPELDAKMSDICYSTAAAPTYFPPHYFATNTSNGDKYEFNLVDGAVATVADPALLSVSVATRRAEEDPAFASIRSLNYKQLLLLSLGTGTNSEFDKTHTAQETAKWGALQWMLVIQQMTEAASSYMTDYYLSTVFQDLHSQNNYLRVQENALTGTTTKADDASEANMELLVQVGENLLKKPVSKDNPETYEEALKRFAKLLSDRKKFRANKASY.

Residues methionine 1 to alanine 23 form the signal peptide. The 199-residue stretch at leucine 32–valine 230 folds into the PNPLA domain. The GXGXXG motif lies at glycine 36–glycine 41. Residues glycine 75 to glycine 79 carry the GXSXG motif. Serine 77 acts as the Nucleophile in catalysis. Asparagine 115 and asparagine 203 each carry an N-linked (GlcNAc...) asparagine glycan. Aspartate 216 serves as the catalytic Proton acceptor. The DGA/G motif lies at aspartate 216–alanine 218.

Belongs to the patatin family. In terms of tissue distribution, tuber.

Its subcellular location is the vacuole. Functionally, probable lipolytic acyl hydrolase (LAH), an activity which is thought to be involved in the response of tubers to pathogens. The polypeptide is Patatin-03 (Solanum tuberosum (Potato)).